The chain runs to 148 residues: uncharacterized protein (148 aa).

The tract at residues 83 to 148 (QPAVIPPVKA…TKKSNKKTRS (66 aa)) is disordered. Basic residues-rich tracts occupy residues 92-103 (AKPKATKKKTPV) and 113-124 (KQTKPKQSKPKS).

This is an uncharacterized protein from Mycoplasma genitalium (strain ATCC 33530 / DSM 19775 / NCTC 10195 / G37) (Mycoplasmoides genitalium).